Here is a 188-residue protein sequence, read N- to C-terminus: Probable nicotinate-nucleotide adenylyltransferase (188 aa).

It belongs to the NadD family.

It carries out the reaction nicotinate beta-D-ribonucleotide + ATP + H(+) = deamido-NAD(+) + diphosphate. Its pathway is cofactor biosynthesis; NAD(+) biosynthesis; deamido-NAD(+) from nicotinate D-ribonucleotide: step 1/1. Catalyzes the reversible adenylation of nicotinate mononucleotide (NaMN) to nicotinic acid adenine dinucleotide (NaAD). The protein is Probable nicotinate-nucleotide adenylyltransferase of Solibacter usitatus (strain Ellin6076).